The following is a 293-amino-acid chain: Ribosomal protein L11 methyltransferase (293 aa).

S-adenosyl-L-methionine contacts are provided by Thr-144, Gly-165, Asp-187, and Asn-228.

The protein belongs to the methyltransferase superfamily. PrmA family.

It localises to the cytoplasm. The catalysed reaction is L-lysyl-[protein] + 3 S-adenosyl-L-methionine = N(6),N(6),N(6)-trimethyl-L-lysyl-[protein] + 3 S-adenosyl-L-homocysteine + 3 H(+). In terms of biological role, methylates ribosomal protein L11. This is Ribosomal protein L11 methyltransferase from Methylococcus capsulatus (strain ATCC 33009 / NCIMB 11132 / Bath).